We begin with the raw amino-acid sequence, 166 residues long: Small ribosomal subunit protein uS5 (166 aa).

The S5 DRBM domain occupies 11–74; that stretch reads LQEKLIAVNR…EKARRNMMNV (64 aa).

The protein belongs to the universal ribosomal protein uS5 family. In terms of assembly, part of the 30S ribosomal subunit. Contacts proteins S4 and S8.

Its function is as follows. With S4 and S12 plays an important role in translational accuracy. In terms of biological role, located at the back of the 30S subunit body where it stabilizes the conformation of the head with respect to the body. This is Small ribosomal subunit protein uS5 from Pectobacterium atrosepticum (strain SCRI 1043 / ATCC BAA-672) (Erwinia carotovora subsp. atroseptica).